A 324-amino-acid chain; its full sequence is Methyltransferase pytC (324 aa).

The interval Met-1 to Cys-28 is disordered.

It belongs to the methyltransferase superfamily. LaeA methyltransferase family.

The protein operates within secondary metabolite biosynthesis. Methyltransferase; part of the gene cluster that mediates the biosynthesis of pyranterreones, a family of antioxidative compounds. The first step of pyranonigrins biosynthesis is performed by the hybrid PKS-NRPS synthetase pytA that condenses 4 malonyl-CoA units ato the acetyl starter unit by the modular PKS of pytA. The acyl chain is then connected to an L-serine through the amide bond by the modular NRPS of pytA. A tetramic acid is formed and released from the PKS-NRPS pytA to give pyranterreone 5 with the help of the thioesterase pytI. Pyranterreone 5 could be methylated by pytC to afford pyranterreone 6. Both pyranterreones 5 and 6 are subsequently oxidized by the FAD-linked oxidoreductase pytB and the cytochrome P450 monooxygenase pytD to form the fused gamma-pyrone core, resulting in pyranterreones 7 and 11, respectively. The hydroxy group at C-8 of pyranterreones 7 and 11 are dehydrated by the aspartyl protease pytH to form a delta-7 double bond to give pyranterreones 3 and 1, 2 accordingly. The exo-methylene of pyranterreone 3 could be reduced into a pendant methyl by reductase pytE to provide pyranterreone 4, also known as cordylactam. Pyranterreone 4 can be reconverted to pyranterreone 3 through pytB-catalyzed dehydrogenation or further oxidized to pyranterreones 9 and 10. In Aspergillus terreus, this protein is Methyltransferase pytC.